A 486-amino-acid chain; its full sequence is ATP synthase subunit beta (486 aa).

An ATP-binding site is contributed by Gly164–Thr171.

This sequence belongs to the ATPase alpha/beta chains family. F-type ATPases have 2 components, CF(1) - the catalytic core - and CF(0) - the membrane proton channel. CF(1) has five subunits: alpha(3), beta(3), gamma(1), delta(1), epsilon(1). CF(0) has four main subunits: a(1), b(1), b'(1) and c(9-12).

The protein resides in the cellular thylakoid membrane. It catalyses the reaction ATP + H2O + 4 H(+)(in) = ADP + phosphate + 5 H(+)(out). Functionally, produces ATP from ADP in the presence of a proton gradient across the membrane. The catalytic sites are hosted primarily by the beta subunits. This chain is ATP synthase subunit beta, found in Prochlorococcus marinus (strain MIT 9301).